We begin with the raw amino-acid sequence, 128 residues long: Elongation factor G (128 aa).

The protein belongs to the GTP-binding elongation factor family. EF-G/EF-2 subfamily.

It is found in the cytoplasm. Catalyzes the GTP-dependent ribosomal translocation step during translation elongation. During this step, the ribosome changes from the pre-translocational (PRE) to the post-translocational (POST) state as the newly formed A-site-bound peptidyl-tRNA and P-site-bound deacylated tRNA move to the P and E sites, respectively. Catalyzes the coordinated movement of the two tRNA molecules, the mRNA and conformational changes in the ribosome. In Planobispora rosea, this protein is Elongation factor G (fusA).